A 131-amino-acid polypeptide reads, in one-letter code: (R)-mandelonitrile lyase (131 aa).

A Cupin type-2 domain is found at 42-104 (VTFEPGARTA…WHGAAPTTAM (63 aa)). Mn(2+) is bound by residues histidine 53, histidine 55, glutamine 59, histidine 94, and histidine 96.

It belongs to the cupin domain-containing hydroxynitrile lyase family. The cofactor is Mn(2+).

The catalysed reaction is (R)-mandelonitrile = benzaldehyde + hydrogen cyanide. Functionally, hydroxynitrile lyase which catalyzes mandelonitrile formation from benzaldehyde and hydrogen cyanide with high stereoselectivity in presence of manganese. The sequence is that of (R)-mandelonitrile lyase from Granulicella tundricola (strain ATCC BAA-1859 / DSM 23138 / MP5ACTX9).